We begin with the raw amino-acid sequence, 588 residues long: Pre-mRNA 3'-end-processing factor FIP1 (588 aa).

The span at 1–10 (MSAGEVERLV) shows a compositional bias: basic and acidic residues. Disordered stretches follow at residues 1 to 81 (MSAG…EDDV), 223 to 291 (QGRT…ESPD), and 334 to 588 (VDNN…TPAE). The segment at 1 to 96 (MSAGEVERLV…DIKTGAPQYG (96 aa)) is sufficient for interaction with PAPOLA. A necessary for stimulating PAPOLA activity region spans residues 1–341 (MSAGEVERLV…TAVDNNFSKP (341 aa)). 2 stretches are compositionally biased toward acidic residues: residues 19–40 (GDEE…EEEN) and 66–80 (TEDD…DEDD). Phosphoserine occurs at positions 70, 72, and 74. The sufficient for interaction with CPSF4 stretch occupies residues 122–228 (KGVDLDAPGS…FKVQQGRTGN (107 aa)). Over residues 259 to 270 (STSSQSQTSTAS) the composition is skewed to low complexity. Residues 280 to 291 (WQDRYGRAESPD) show a composition bias toward basic and acidic residues. Residue Ser289 is modified to Phosphoserine. A compositionally biased stretch (pro residues) spans 340–398 (KPPPFFPPGAPPTHLPPPPFLPPPPTVSTAPPLIPPPGIPITVPPPGFPPPPGAPPPSL). Phosphotyrosine is present on Tyr420. The segment at 437–588 (SLVDTSKQWD…QESTEATPAE (152 aa)) is sufficient for interaction with CPSF1 and CSTF3. Positions 448–486 (YARREKDRDRERDRDRERDRDRDRERERTRERERERDHS) are enriched in basic and acidic residues. An arg/Asp/Glu-rich domain region spans residues 451–484 (REKDRDRERDRDRERDRDRDRERERTRERERERD). Ser486 bears the Phosphoserine mark. Phosphothreonine is present on Thr488. Phosphoserine occurs at positions 490 and 494. The span at 495–522 (DEERYRYREYAERGYERHRASREKEERH) shows a compositional bias: basic and acidic residues. The span at 536-545 (KSSRSNSRRR) shows a compositional bias: basic residues. Ser548 carries the post-translational modification Phosphoserine. Basic residues predominate over residues 554–564 (HRRHKHKKSKR).

It belongs to the FIP1 family. As to quaternary structure, component of the cleavage and polyadenylation specificity factor (CPSF) complex, composed of CPSF1, CPSF2, CPSF3, CPSF4 and FIP1L1. Found in a complex with CPSF1, FIP1L1 and PAPOLA. Interacts with CPSF1, CPSF4, CSTF2 and CSTF3. Interacts with AHCYL1 (when phosphorylated); the interaction is direct and associates AHCYL1 with the CPSF complex and RNA. Interacts with PAPOLA; the interaction seems to be increased by the interaction with AHCYL1. Interacts with NUDT21/CPSF5; this interaction occurs in a RNA sequence-specific manner. Interacts (preferentially via unphosphorylated form and Arg/Glu/Asp-rich domain) with CPSF6 (via Arg/Ser-rich domain); this interaction mediates, at least in part, the interaction between the CFIm and CPSF complexes and may be inhibited by CPSF6 hyper-phosphorylation. Interacts (preferentially via unphosphorylated form and Arg/Asp/Glu-rich domain) with CPSF7 (via Arg/Ser-rich domain); this interaction mediates, at least in part, the interaction between the CFIm and CPSF complexes and may be inhibited by CPSF7 hyper-phosphorylation.

Its subcellular location is the nucleus. Functionally, component of the cleavage and polyadenylation specificity factor (CPSF) complex that plays a key role in pre-mRNA 3'-end formation, recognizing the AAUAAA signal sequence and interacting with poly(A) polymerase and other factors to bring about cleavage and poly(A) addition. FIP1L1 contributes to poly(A) site recognition and stimulates poly(A) addition. Binds to U-rich RNA sequence elements surrounding the poly(A) site. May act to tether poly(A) polymerase to the CPSF complex. The chain is Pre-mRNA 3'-end-processing factor FIP1 (FIP1L1) from Pongo abelii (Sumatran orangutan).